The chain runs to 218 residues: tRNA (guanine-N(7)-)-methyltransferase (218 aa).

The S-adenosyl-L-methionine site is built by Glu43, Asp68, Glu101, and Asn124. Substrate is bound by residues Lys128 and Asp160.

This sequence belongs to the class I-like SAM-binding methyltransferase superfamily. TrmB family.

It catalyses the reaction guanosine(46) in tRNA + S-adenosyl-L-methionine = N(7)-methylguanosine(46) in tRNA + S-adenosyl-L-homocysteine. It functions in the pathway tRNA modification; N(7)-methylguanine-tRNA biosynthesis. Its function is as follows. Catalyzes the formation of N(7)-methylguanine at position 46 (m7G46) in tRNA. The chain is tRNA (guanine-N(7)-)-methyltransferase from Acetivibrio thermocellus (strain ATCC 27405 / DSM 1237 / JCM 9322 / NBRC 103400 / NCIMB 10682 / NRRL B-4536 / VPI 7372) (Clostridium thermocellum).